Consider the following 292-residue polypeptide: Geranyl diphosphate 2-C-methyltransferase (292 aa).

Belongs to the geranyl diphosphate 2-C-methyltransferase family. Requires Mg(2+) as cofactor.

It carries out the reaction (2E)-geranyl diphosphate + S-adenosyl-L-methionine = (E)-2-methylgeranyl diphosphate + S-adenosyl-L-homocysteine + H(+). Catalyzes the SAM-dependent methylation of geranyl diphosphate (GPP) to yield (E)-2-methylgeranyl diphosphate (2-MeGPP). The sequence is that of Geranyl diphosphate 2-C-methyltransferase from Streptomyces coelicolor (strain ATCC BAA-471 / A3(2) / M145).